A 639-amino-acid polypeptide reads, in one-letter code: MAKVIGIDLGTTNSCVAIMDGSQPRVIENAEGARTTPSIVAFTDDERLAGQSAKRQAVTNPENTIFGVKRLIGRRINDEHLEKDKKNLPFEIVDGGNGDAWVKAKGETYSPSQISAFILQKMKETAESYLGEDVTQAVITVPAYFNDAQRQATKDAGKIAGLEVLRIINEPTAAALAYGLDKKETRTIAVYDLGGGTFDVTILEIDDGLFEVKSTNGDTFLGGEDFDMRIVNYLAEEFKKENSVDLTQDKMALQRLKEAAEKAKIELSSASQTEINQPFISMGSNGQPLHMVMKLTRAKLESLVGDLIKASIKPCAAALKDAGLSKGDIDEVVLVGGMTRMPKVIDEVTKFFGKEPHKGVNPDEVVAMGAAIQAGVLQGDVKDVVLLDVTPLSMGIETLGGVFTRLIDRNTTIPTKKSQIFSTADDNQSAVTLRVFQGEREMAADNKILGQFNLEGIPPAPRGVPQIEVTFDIDANGIVSVGAKDKGTGKEQQITIQASGGLSDDDIEAMVREAEENAEADKDRKDLVETRNQAESLVHGTEKSLEEHGEKVDPSTVEAIELALGALKETLETDDTAKIKGGIQNVTEAAMRLGEAIYKAEADKAEAAQDGAPEEEERGVDEDIVDADFEDLDDDRKRG.

Threonine 197 is subject to Phosphothreonine; by autocatalysis. Basic and acidic residues-rich tracts occupy residues 514-529 and 540-553; these read AEEN…DLVE and GTEK…EKVD. Disordered stretches follow at residues 514–554 and 603–639; these read AEEN…KVDP and DKAE…RKRG. Residues 612–633 are compositionally biased toward acidic residues; that stretch reads APEEEERGVDEDIVDADFEDLD.

This sequence belongs to the heat shock protein 70 family.

Acts as a chaperone. This Jannaschia sp. (strain CCS1) protein is Chaperone protein DnaK.